We begin with the raw amino-acid sequence, 457 residues long: ATP synthase subunit beta (457 aa).

Glycine 147 to threonine 154 serves as a coordination point for ATP.

Belongs to the ATPase alpha/beta chains family. F-type ATPases have 2 components, CF(1) - the catalytic core - and CF(0) - the membrane proton channel. CF(1) has five subunits: alpha(3), beta(3), gamma(1), delta(1), epsilon(1). CF(0) has three main subunits: a(1), b(2) and c(9-12). The alpha and beta chains form an alternating ring which encloses part of the gamma chain. CF(1) is attached to CF(0) by a central stalk formed by the gamma and epsilon chains, while a peripheral stalk is formed by the delta and b chains.

It localises to the cell inner membrane. The catalysed reaction is ATP + H2O + 4 H(+)(in) = ADP + phosphate + 5 H(+)(out). In terms of biological role, produces ATP from ADP in the presence of a proton gradient across the membrane. The catalytic sites are hosted primarily by the beta subunits. This Haemophilus influenzae (strain PittEE) protein is ATP synthase subunit beta.